Consider the following 525-residue polypeptide: GMP synthase [glutamine-hydrolyzing] (525 aa).

Positions 9–207 constitute a Glutamine amidotransferase type-1 domain; sequence RILILDFGSQ…VLDICGCDAL (199 aa). C86 functions as the Nucleophile in the catalytic mechanism. Residues H181 and E183 contribute to the active site. The 193-residue stretch at 208–400 folds into the GMPS ATP-PPase domain; it reads WTSAAIIEDT…LGLPYDMLYR (193 aa). 235-241 provides a ligand contact to ATP; sequence SGGVDSS.

As to quaternary structure, homodimer.

The enzyme catalyses XMP + L-glutamine + ATP + H2O = GMP + L-glutamate + AMP + diphosphate + 2 H(+). Its pathway is purine metabolism; GMP biosynthesis; GMP from XMP (L-Gln route): step 1/1. In terms of biological role, catalyzes the synthesis of GMP from XMP. The protein is GMP synthase [glutamine-hydrolyzing] of Proteus mirabilis (strain HI4320).